The primary structure comprises 389 residues: Chalcone synthase 3 (389 aa).

Residue Cys164 is part of the active site.

This sequence belongs to the thiolase-like superfamily. Chalcone/stilbene synthases family.

The catalysed reaction is (E)-4-coumaroyl-CoA + 3 malonyl-CoA + 3 H(+) = 2',4,4',6'-tetrahydroxychalcone + 3 CO2 + 4 CoA. The protein operates within secondary metabolite biosynthesis; flavonoid biosynthesis. The primary product of this enzyme is 4,2',4',6'-tetrahydroxychalcone (also termed naringenin-chalcone or chalcone) which can under specific conditions spontaneously isomerize into naringenin. In Camellia sinensis (Tea plant), this protein is Chalcone synthase 3 (CHS3).